Reading from the N-terminus, the 563-residue chain is MLLLLVSVIVALALVAPAPETQEKRLQVAQAPNVVLVASDSFDGRLTFQPGSQVVKLPFINFMRARGTTFLNAYTNSPICCPSRAAMWSGLFTHLTESWNNFKGLDPNYTTWMDVMEKHGYQTQKFGKLDYSSGHHSISNRVEAWTRDVAFLLRQEGRPIINLIPDKNRRRVMDKDWQNTDKAIAWLRQVNSTKPFVLYLGLNLPHPYPSPSSGENFGSSTFHTSLYWLEKVAYDAIKIPKWLALSEMHPVDYYSSYTKNCTGKFTENEIKNIRAFYYAMCAETDAMLGEIILALHKLNLLQKTIVIYTSDHGEMAMEHRQFYKMSMYEASAHVPILMMGPGIKANLQVPSLVSLVDIYPTMLDIAGIPLPLNLSGYSLLPLSSNTSANDQAFRVHHPPWILSEFHGCNANASTYMLRTGQWKYIAYSDGTLVQPQLFDLSLDPDELTNIATEFPEITYSLDQQLRSVINYPKVSASVHRYNKEQFIMWKQSVAQNYSNYIAHLRWHQDWQKDPRKYENAIQRWLAIHSSPPTHSPLSLVHQWLTTHSSPIAVDNKKTFSSYT.

The signal sequence occupies residues methionine 1–proline 17. Ca(2+)-binding residues include aspartate 40 and cysteine 80. The active-site Nucleophile is cysteine 80. The residue at position 80 (cysteine 80) is a 3-oxoalanine (Cys). N-linked (GlcNAc...) asparagine glycosylation is present at asparagine 108. Position 128 (lysine 128) interacts with substrate. The N-linked (GlcNAc...) asparagine glycan is linked to asparagine 191. Histidine 249 serves as a coordination point for substrate. N-linked (GlcNAc...) asparagine glycosylation occurs at asparagine 260. Positions 311 and 312 each coordinate Ca(2+). 3 N-linked (GlcNAc...) asparagine glycosylation sites follow: asparagine 373, asparagine 411, and asparagine 496.

This sequence belongs to the sulfatase family. Ca(2+) is required as a cofactor. The conversion to 3-oxoalanine (also known as C-formylglycine, FGly), of a serine or cysteine residue in prokaryotes and of a cysteine residue in eukaryotes, is critical for catalytic activity. In terms of processing, the 75-kDa precursor undergoes proteolytic processing to yield a 23 kDa form. Post-translationally, N-glycosylated with both high mannose and complex type sugars.

It localises to the secreted. The protein resides in the lysosome. It carries out the reaction an aryl sulfate + H2O = a phenol + sulfate + H(+). The catalysed reaction is Hydrolysis of the 2-sulfate groups of the 2-O-sulfo-D-glucuronate residues of chondroitin sulfate, heparin and heparitin sulfate.. In terms of biological role, catalyzes the hydrolysis of pseudosubstrates such as p-nitrocatechol sulfate and p-nitrophenyl sulfate. Catalyzes the hydrolysis of the 2-sulfate groups of the 2-O-sulfo-D-glucuronate residues of chondroitin sulfate, heparin and heparitin sulfate. Acts selectively on 2-sulfoglucuronate and lacks activity against 2-sulfoiduronate. The chain is Arylsulfatase K (Arsk) from Rattus norvegicus (Rat).